The primary structure comprises 596 residues: Thioredoxin reductase 1, mitochondrial (596 aa).

Residues 59-87 form a disordered region; that stretch reads LTGQRGSRDSTGATGGNAPAGSGAGAPPP. The span at 68–79 shows a compositional bias: low complexity; it reads STGATGGNAPAG. FAD contacts are provided by residues 120–126, 143–147, 159–170, 233–235, 262–266, Ser282, Phe286, and Tyr302; these read IGGGSAG, LDFVK, GGTCVNVGCIPK, GLG, and AVGGR. Cysteines 162 and 167 form a disulfide. NADP(+) is bound by residues 322 to 328 and Pro355; that span reads VRSIVLR. FAD contacts are provided by residues 392–399, 429–432, 438–443, and Phe472; these read RKGLVDDL, VGDI, and ELTPVA. His569 acts as the Proton acceptor in catalysis. Pro570 serves as a coordination point for FAD. An intrachain disulfide couples Cys594 to Cys595.

Belongs to the class-I pyridine nucleotide-disulfide oxidoreductase family. Homodimer. It depends on FAD as a cofactor. As to expression, during embryogenesis, expression is seen in germ cell progenitors, developing midgut, hindgut and proventriculus.

It localises to the mitochondrion. The protein localises to the cytoplasm. It catalyses the reaction [thioredoxin]-dithiol + NADP(+) = [thioredoxin]-disulfide + NADPH + H(+). Thioredoxin system is a major player in glutathione metabolism, due to the demonstrated absence of a glutathione reductase. Functionally interacts with the Sod/Cat reactive oxidation species (ROS) defense system and thereby has a role in preadult development and life span. Lack of a glutathione reductase suggests antioxidant defense in Drosophila, and probably in related insects, differs fundamentally from that in other organisms. This is Thioredoxin reductase 1, mitochondrial from Drosophila melanogaster (Fruit fly).